The following is a 336-amino-acid chain: Ribosomal RNA large subunit methyltransferase F (336 aa).

Belongs to the methyltransferase superfamily. METTL16/RlmF family.

The protein resides in the cytoplasm. It carries out the reaction adenosine(1618) in 23S rRNA + S-adenosyl-L-methionine = N(6)-methyladenosine(1618) in 23S rRNA + S-adenosyl-L-homocysteine + H(+). Functionally, specifically methylates the adenine in position 1618 of 23S rRNA. This is Ribosomal RNA large subunit methyltransferase F from Yersinia pestis bv. Antiqua (strain Angola).